The sequence spans 696 residues: uncharacterized protein (696 aa).

The region spanning 293–426 is the GGDEF domain; it reads SVLGLVLLGF…GSRQYCFYEE (134 aa). The 255-residue stretch at 435–689 folds into the EAL domain; the sequence is RIQLEHALHQ…EITAFLAEGN (255 aa).

This is an uncharacterized protein from Synechocystis sp. (strain ATCC 27184 / PCC 6803 / Kazusa).